A 1237-amino-acid polypeptide reads, in one-letter code: ATP-dependent RNA helicase DEAH13 (1237 aa).

Disordered stretches follow at residues 1–51 (MASV…NSNV) and 115–148 (AMQLSKAGVETEHSDESVEQNDNDDDSCMDEPTT). The segment covering 24–38 (SNKMQDKLNSNNNTG) has biased composition (polar residues). Positions 131 to 143 (SVEQNDNDDDSCM) are enriched in acidic residues. One can recognise a Helicase ATP-binding domain in the interval 251–443 (MEAINRHPAV…KRLFPNIPPL (193 aa)). 264–271 (GQTGCGKT) is an ATP binding site. The short motif at 367–370 (DEAH) is the DEAH box element. The segment at 543 to 585 (DDDSNNQNSRFSSHGEDPSDIGDGNYDDDFEEEDMYESDEDRD) is disordered. Residues 567–585 (NYDDDFEEEDMYESDEDRD) are compositionally biased toward acidic residues. The Helicase C-terminal domain maps to 605–776 (ALRAAFNALA…GVILLMKSMN (172 aa)). The segment at 876–910 (EKKNESKDADKTVKQEDKQRKKDRKEKIKAARDRF) is disordered.

This sequence belongs to the DEAD box helicase family. DEAH subfamily.

The enzyme catalyses ATP + H2O = ADP + phosphate + H(+). The protein is ATP-dependent RNA helicase DEAH13 of Arabidopsis thaliana (Mouse-ear cress).